The chain runs to 850 residues: Pentatricopeptide repeat-containing protein At3g49170, chloroplastic (850 aa).

The N-terminal 50 residues, 1-50, are a transit peptide targeting the chloroplast; it reads MAMISFSFPSPAKLPIKSQPSVSNRINVADRLILRHLNAGDLRGAVSALD. PPR repeat units follow at residues 61–95, 96–130, 131–164, 165–199, 201–232, 233–267, 268–302, 303–334, 335–370, 372–406, 407–437, 438–472, 473–507, 508–538, 539–573, 574–609, and 610–640; these read DSVTFSSLLKSCIRARDFRLGKLVHARLIEFDIEP, DSVLYNSLISLYSKSGDSAKAEDVFETMRRFGKRD, VVSWSAMMACYGNNGRELDAIKVFVEFLELGLVP, NDYCYTAVIRACSNSDFVGVGRVTLGFLMKTGHFE, DVCVGCSLIDMFVKGENSFENAYKVFDKMSEL, NVVTWTLMITRCMQMGFPREAIRFFLDMVLSGFES, DKFTLSSVFSACAELENLSLGKQLHSWAIRSGLVD, DVECSLVDMYAKCSADGSVDDCRKVFDRMEDH, SVMSWTALITGYMKNCNLATEAINLFSEMITQGHVE, NHFTFSSAFKACGNLSDPRVGKQVLGQAFKRGLAS, NSSVANSVISMFVKSDRMEDAQRAFESLSEK, NLVSYNTFLDGTCRNLNFEQAFKLLSEITERELGV, SAFTFASLLSGVANVGSIRKGEQIHSQVVKLGLSC, NQPVCNALISMYSKCGSIDTASRVFNFMENR, NVISWTSMITGFAKHGFAIRVLETFNQMIEEGVKP, NEVTYVAILSACSHVGLVSEGWRHFNSMYEDHKIKP, and KMEHYACMVDLLCRAGLLTDAFEFINTMPFQ. Residues 645–720 form a type E motif region; sequence VWRTFLGACR…EGGCSWIEVG (76 aa). A type E(+) motif region spans residues 721-751; it reads DKIHKFYVGDTAHPNAHQIYDELDRLITEIK. The interval 752 to 850 is type DYW motif; the sequence is RCGYVPDTDL…DGKCSCNDYW (99 aa).

This sequence belongs to the PPR family. PCMP-H subfamily.

It is found in the plastid. Its subcellular location is the chloroplast. In terms of biological role, may play a role in embryogenesis. The polypeptide is Pentatricopeptide repeat-containing protein At3g49170, chloroplastic (EMB2261) (Arabidopsis thaliana (Mouse-ear cress)).